Consider the following 1383-residue polypeptide: DNA-directed RNA polymerase subunit beta (1383 aa).

Belongs to the RNA polymerase beta chain family. In terms of assembly, the RNAP catalytic core consists of 2 alpha, 1 beta, 1 beta' and 1 omega subunit. When a sigma factor is associated with the core the holoenzyme is formed, which can initiate transcription.

It catalyses the reaction RNA(n) + a ribonucleoside 5'-triphosphate = RNA(n+1) + diphosphate. Its function is as follows. DNA-dependent RNA polymerase catalyzes the transcription of DNA into RNA using the four ribonucleoside triphosphates as substrates. This is DNA-directed RNA polymerase subunit beta from Xanthomonas oryzae pv. oryzae (strain MAFF 311018).